The primary structure comprises 1347 residues: Spermatogenesis-associated protein 31A5 (1347 aa).

A helical membrane pass occupies residues 23–43; that stretch reads PWVLDIFLTLVFALGFFFLLL. Disordered stretches follow at residues 55–87, 106–233, 373–397, 628–657, 900–955, 1084–1161, and 1313–1335; these read PSPS…GREC, GPHL…RDST, EQDT…GPQK, DESP…KEAQ, RGIP…REAV, VHEE…PSVS, and KAVS…SHHH. A compositionally biased stretch (basic residues) spans 60-82; that stretch reads GKRKCPVGRRRRPRGRMKNHSLR. The span at 165–178 shows a compositional bias: polar residues; the sequence is LASTPSPGPMTTSV. The span at 198–211 shows a compositional bias: pro residues; sequence PEPPALFPHPPHTP. Composition is skewed to polar residues over residues 631-651 and 927-948; these read PGTS…STGE and LTYS…SSKA. Basic and acidic residues-rich tracts occupy residues 1108 to 1127 and 1137 to 1146; these read HKSE…RLEG and RKTEDTHQDE.

It belongs to the SPATA31 family.

The protein resides in the membrane. Functionally, may play a role in spermatogenesis. This Homo sapiens (Human) protein is Spermatogenesis-associated protein 31A5 (SPATA31A5).